A 1934-amino-acid polypeptide reads, in one-letter code: Pyruvate dehydrogenase [NADP(+)] (1934 aa).

2 4Fe-4S ferredoxin-type domains span residues 710–739 and 767–796; these read SIPIVDMNKCTQCNYCSIVCPHAAIRPFLL and YRIQVTPLDCTGCELCVHACPDDALHMEGL. [4Fe-4S] cluster is bound by residues Cys719, Cys722, Cys725, Cys729, Cys776, Cys779, Cys782, and Cys786. A Flavodoxin-like domain is found at 1288–1438; the sequence is MHVLYGTETG…ELIEWLPDYL (151 aa). The FAD-binding FR-type domain occupies 1501–1759; it reads PNSVLLPVIE…NIKASAFNLP (259 aa). FAD is bound by residues 1542–1553 and 1685–1695; these read YCLGDSLALYGQ and IKSRSYSIASC.

It in the N-terminal section; belongs to the pyruvate:ferredoxin/flavodoxin oxidoreductase family. In terms of assembly, homodimer. The cofactor is FAD. FMN is required as a cofactor. Requires thiamine diphosphate as cofactor.

It carries out the reaction pyruvate + NADP(+) + CoA = acetyl-CoA + CO2 + NADPH. In terms of biological role, may have an important role in respiratory metabolism. Cryptosporidium have a relic mitochondrion with no function in energy metabolism so it is not known if PFOR has a function. This Cryptosporidium parvum protein is Pyruvate dehydrogenase [NADP(+)] (PFOR).